The primary structure comprises 336 residues: Ketol-acid reductoisomerase (NADP(+)) (336 aa).

The 181-residue stretch at 3–183 folds into the KARI N-terminal Rossmann domain; sequence AKMYYDRDVD…GCTKAGVLET (181 aa). NADP(+)-binding positions include 26-29, R49, S52, S54, and 84-87; these read YGSQ and DEQQ. The active site involves H109. Position 135 (G135) interacts with NADP(+). The region spanning 184–329 is the KARI C-terminal knotted domain; that stretch reads TFKEETETDL…KELRDQMPFI (146 aa). The Mg(2+) site is built by D192, E196, E228, and E232. A substrate-binding site is contributed by S253.

Belongs to the ketol-acid reductoisomerase family. Requires Mg(2+) as cofactor.

It carries out the reaction (2R)-2,3-dihydroxy-3-methylbutanoate + NADP(+) = (2S)-2-acetolactate + NADPH + H(+). The enzyme catalyses (2R,3R)-2,3-dihydroxy-3-methylpentanoate + NADP(+) = (S)-2-ethyl-2-hydroxy-3-oxobutanoate + NADPH + H(+). The protein operates within amino-acid biosynthesis; L-isoleucine biosynthesis; L-isoleucine from 2-oxobutanoate: step 2/4. It participates in amino-acid biosynthesis; L-valine biosynthesis; L-valine from pyruvate: step 2/4. Functionally, involved in the biosynthesis of branched-chain amino acids (BCAA). Catalyzes an alkyl-migration followed by a ketol-acid reduction of (S)-2-acetolactate (S2AL) to yield (R)-2,3-dihydroxy-isovalerate. In the isomerase reaction, S2AL is rearranged via a Mg-dependent methyl migration to produce 3-hydroxy-3-methyl-2-ketobutyrate (HMKB). In the reductase reaction, this 2-ketoacid undergoes a metal-dependent reduction by NADPH to yield (R)-2,3-dihydroxy-isovalerate. This Deinococcus radiodurans (strain ATCC 13939 / DSM 20539 / JCM 16871 / CCUG 27074 / LMG 4051 / NBRC 15346 / NCIMB 9279 / VKM B-1422 / R1) protein is Ketol-acid reductoisomerase (NADP(+)).